Reading from the N-terminus, the 213-residue chain is Large ribosomal subunit protein uL3 (213 aa).

Gln-151 carries the N5-methylglutamine modification.

Belongs to the universal ribosomal protein uL3 family. As to quaternary structure, part of the 50S ribosomal subunit. Forms a cluster with proteins L14 and L19. Methylated by PrmB.

One of the primary rRNA binding proteins, it binds directly near the 3'-end of the 23S rRNA, where it nucleates assembly of the 50S subunit. This Rhizobium etli (strain ATCC 51251 / DSM 11541 / JCM 21823 / NBRC 15573 / CFN 42) protein is Large ribosomal subunit protein uL3.